Here is a 143-residue protein sequence, read N- to C-terminus: Large ribosomal subunit protein uL15 (143 aa).

2 stretches are compositionally biased toward basic residues: residues 1 to 13 (MIRK…KMRG) and 23 to 38 (KKHR…GNAG). The tract at residues 1-38 (MIRKSKKITKMRGSRTCGYGEAKKHRGAGHRGGRGNAG) is disordered.

Belongs to the universal ribosomal protein uL15 family. As to quaternary structure, part of the 50S ribosomal subunit.

Its function is as follows. Binds to the 23S rRNA. This chain is Large ribosomal subunit protein uL15, found in Methanococcus maripaludis (strain C5 / ATCC BAA-1333).